We begin with the raw amino-acid sequence, 390 residues long: NADH-quinone oxidoreductase subunit D (390 aa).

Belongs to the complex I 49 kDa subunit family. In terms of assembly, NDH-1 is composed of 14 different subunits. Subunits NuoB, C, D, E, F, and G constitute the peripheral sector of the complex.

The protein resides in the cell inner membrane. It catalyses the reaction a quinone + NADH + 5 H(+)(in) = a quinol + NAD(+) + 4 H(+)(out). In terms of biological role, NDH-1 shuttles electrons from NADH, via FMN and iron-sulfur (Fe-S) centers, to quinones in the respiratory chain. The immediate electron acceptor for the enzyme in this species is believed to be ubiquinone. Couples the redox reaction to proton translocation (for every two electrons transferred, four hydrogen ions are translocated across the cytoplasmic membrane), and thus conserves the redox energy in a proton gradient. The sequence is that of NADH-quinone oxidoreductase subunit D from Geobacter sulfurreducens (strain ATCC 51573 / DSM 12127 / PCA).